Consider the following 1788-residue polypeptide: Genome polyprotein (1788 aa).

Residues 1 to 184 are interaction with host MAP1LC3A/LC3; sequence MMMASKDVVA…LCPLPPIDLR (184 aa). Low complexity predominate over residues 58–68; it reads GRTTPEPTGTA. Residues 58 to 86 form a disordered region; it reads GRTTPEPTGTAGPPPKQQRDRPPRTQEEV. Residues 74 to 84 are compositionally biased toward basic and acidic residues; it reads QQRDRPPRTQE. The interaction with NTPase stretch occupies residues 185–399; sequence NMEPASEPTI…ASLLPDFHLQ (215 aa). The interaction with NS4 stretch occupies residues 302–399; the sequence is HPTQSWSQQT…ASLLPDFHLQ (98 aa). Host ER membrane association regions lie at residues 319–350 and 361–399; these read KLELVRDAILAAVNGLVSQPFKNFLGKLKPLN and TFMGVVEMVILLLELFGVFWNPPDVSNFIASLLPDFHLQ. The segment at 400 to 575 is interaction with NS1-2 and NS4 and homooligomerization; sequence GPEDLARDLV…GKTKAAEHLA (176 aa). The 166-residue stretch at 533 to 698 folds into the SF3 helicase domain; it reads RISMARSALA…EQIRRVSPGD (166 aa). 561-568 contributes to the ATP binding site; sequence GPPGIGKT. Residues 652–757 form an important for mitochondrion targeting region; it reads AIVITTNAPG…AVALTMERQD (106 aa). Residues 827 to 833 form a functions as endoplasmic reticulum export signal region; the sequence is YSLESDG. The host membrane association stretch occupies residues 866–911; that stretch reads RAVAYASCIQSAITSILQIAGSALVVNRAVKRMFGTRTATLSLEGP. Residues 948–979 are disordered; sequence EEVAHTEIPSATMEGKNKGKNKKGRGRRNNYN. Residues 965 to 975 are compositionally biased toward basic residues; the sequence is KGKNKKGRGRR. The tract at residues 988 to 993 is acidic; sequence DEEYEE. Tyr991 is modified (O-(5'-phospho-RNA)-tyrosine). Positions 1083-1099 are interaction with host EIF4G; that stretch reads WADDEREVDYNEKISFE. The region spanning 1100-1280 is the Peptidase C37 domain; sequence APPTLWSRVT…QASEGETTLE (181 aa). Catalysis depends on for 3CLpro activity residues His1129, Glu1153, and Cys1238. A RdRp catalytic domain is found at 1515 to 1636; the sequence is KYHFDADYTA…STDIEFDPAK (122 aa). Residues Asp1519, Asp1521, Asp1623, and Glu1624 each coordinate Mg(2+).

Homodimer. Homooligomer. Interacts with NTPase; this interaction increases the proapoptotic activity of the NTPase and is crucial for the formation of the viral replication complex. Interacts with NS4; this interaction is crucial for the formation of the viral replication complex. Interacts (via N-terminus) with host VAPA. Interacts with host MAP1LC3A/LC3; this interaction does not seem to be linked to host autophagy, but rather plays a role in the formation of viral factories. In terms of assembly, homooligomer. Interacts with NS1-2; this interaction increases the proapoptotic activity of the NTPase and is crucial for the formation of the viral replication complex. Interacts with NS4; this interaction increases the proapoptotic activity of the NTPase. As to quaternary structure, homodimer. Monomer; in solution. Interacts with NTPase; this interaction increases the proapoptotic activity of the NTPase. Interacts with NS1-2; this interaction is crucial for the formation of the viral replication complex. In terms of assembly, monomer. Interacts with the RNA-directed RNA polymerase; this interaction induces the multimerization of the RdRp and enhances its activity. Interacts with host IEF4G1; this interaction plays a role in translation of viral proteins. As to quaternary structure, homohexamer; also forms fibrous hexameric oligomer. Interacts with the viral genome-linked protein; this interaction induces the multimerization of the RdRp and enhances its activity. The cofactor is Mg(2+). Mn(2+) is required as a cofactor. Post-translationally, specific enzymatic cleavages in vivo yield mature proteins. 3CLpro is first autocatalytically cleaved, then processes the whole polyprotein. NS1/2-3 and NS3-4 sites are cleaved rapidly and NS4-5, NS5-6, and NS6-7 sites are processed subsequently and less efficiently. VPg is uridylylated by the polymerase and is covalently attached to the 5'-end of the polyadenylated genomic and subgenomic RNAs. This uridylylated form acts as a nucleotide-peptide primer for the polymerase.

Its subcellular location is the host Golgi apparatus membrane. The protein resides in the host endoplasmic reticulum membrane. It catalyses the reaction a ribonucleoside 5'-triphosphate + H2O = a ribonucleoside 5'-diphosphate + phosphate + H(+). The catalysed reaction is Endopeptidase with a preference for cleavage when the P1 position is occupied by Glu-|-Xaa and the P1' position is occupied by Gly-|-Yaa.. The enzyme catalyses RNA(n) + a ribonucleoside 5'-triphosphate = RNA(n+1) + diphosphate. Induces the proliferation of the host smooth ER membranes forming long tubular structures. These remodeled membranes probably form the viral factories that contain the replication complex. May play a role in viral replication by interacting with host VAPA, a vesicle-associated membrane protein that plays a role in SNARE-mediated vesicle fusion. This interaction may target replication complex to intracellular membranes. In terms of biological role, displays NTPase activity, but no helicase activity. Induces the formation of convoluted membranes derived from the host ER. These remodeled membranes probably form the viral factories that contain the replication complex. Initiates host cell death by targeting the mitochondrial outer membrane, leading to the permeabilization of mitochondria, programmed host cell death and viral egress. Probably plays a role in preventing the assembly of host stress granules. Its function is as follows. Probable key protein responsible for the formation of membrane alterations by the virus. Induces the formation of convoluted membranes derived from the host ER. These remodeled membranes probably form the viral factories that contain the replication complex. May play a role in targeting replication complex to intracellular membranes. Functionally, viral genome-linked protein is covalently linked to the 5'-end of the positive-strand, negative-strand genomic RNAs and subgenomic RNA. Acts as a genome-linked replication primer. May recruit ribosome to viral RNA thereby promoting viral proteins translation. Interacts with host translation initiation complex to allow the translation of viral proteins. Induces the formation of aggregates of RNA-directed RNA polymerase in the presence of RNA. Through its interaction with the viral RNA-directed RNA polymerase, plays a crucial role in enhancing the polymerase activity. Processes the polyprotein. 3CLpro-RdRp is first released by autocleavage, then all other proteins are cleaved. May cleave polyadenylate-binding protein thereby inhibiting cellular translation. In terms of biological role, replicates genomic and antigenomic RNA by recognizing replications specific signals. Also transcribes a subgenomic mRNA by initiating RNA synthesis internally on antigenomic RNA. This sgRNA codes for structural proteins. Catalyzes the covalent attachment VPg with viral RNAs. The sequence is that of Genome polyprotein from Southampton virus (strain GI/Human/United Kingdom/Southampton/1991) (SHV).